A 514-amino-acid polypeptide reads, in one-letter code: G-protein coupled receptor Mth (514 aa).

Positions 1 to 24 (MKTLLVLRISTVILVVLVIQKSYA) are cleaved as a signal peptide. The Extracellular portion of the chain corresponds to 25-218 (DILECDYFDT…CLIVPSITGQ (194 aa)). Intrachain disulfides connect Cys29-Cys83, Cys85-Cys90, Cys94-Cys188, Cys95-Cys106, and Cys150-Cys209. A glycan (N-linked (GlcNAc...) asparagine) is linked at Asn45. Residues Asn109, Asn123, Asn170, and Asn198 are each glycosylated (N-linked (GlcNAc...) asparagine). A helical membrane pass occupies residues 219 to 239 (TVVMISSLICMVLTIAVYLFV). Residues 240–248 (KKLQNLHGK) are Cytoplasmic-facing. A helical membrane pass occupies residues 249 to 269 (CFICYMVCLFMGYLFLLLDLW). The Extracellular portion of the chain corresponds to 270–278 (QISISFCKP). The chain crosses the membrane as a helical span at residues 279–299 (AGFLGYFFVMAAFFWLSVISL). The Cytoplasmic segment spans residues 300 to 320 (HLWNTFRGSSHKANRFLFEHR). The helical transmembrane segment at 321 to 341 (FLAYNTYAWGMAVVLTGITVL) threads the bilayer. Residues 342-370 (ADNIVENQDWNPRVGHEGHCWIYTQAWSA) are Extracellular-facing. A helical transmembrane segment spans residues 371-391 (MLYFYGPMVFLIAFNITMFIL). Topologically, residues 392-424 (TAKRILGVKKDIQNFAHRQERKQKLNSDKQTYT) are cytoplasmic. A helical transmembrane segment spans residues 425–445 (FFLRLFIIMGLSWSLEIGSYF). Over 446–454 (SQSNQTWAN) the chain is Extracellular. Asn449 carries N-linked (GlcNAc...) asparagine glycosylation. The helical transmembrane segment at 455 to 475 (VFLVADYLNWSQGIIIFILFV) threads the bilayer. The Cytoplasmic segment spans residues 476-514 (LKRSTWRLLQESIRGEGEEVNNSEEEISLENTTTRNVLL).

Belongs to the G-protein coupled receptor 2 family. Mth subfamily. As to quaternary structure, homodimer.

It is found in the cell membrane. Involved in biological aging and stress response. Essential for adult survival. Required in the presynaptic motor neuron to up-regulate neurotransmitter exocytosis at larval glutamatergic neuromuscular junctions (NMJs). Regulates a step associated with docking and clustering of vesicles at release sites. SP/Acp70A and sun are agonists that activate mth in vitro. This Drosophila melanogaster (Fruit fly) protein is G-protein coupled receptor Mth (mth).